The sequence spans 412 residues: MPIKILMPVLSPTMTEGNLARWLKKEGDKVNPGEVIAEIETDKATMEVEAVDEGILAKIVIPQNSQNVPVNSLIAVLSEEGEEKTDIDAFIAKNNNVSPSPKTDANLPKPHENIAKVEEQVAVIKHDASKIFASPLAKRLAKMGNIRLESVKGSGPHGRIVKQDILSYTPSTVHNKIVSRNPEEYRLVPNNNIRKIIAKRLLESKQTVPHFYLSIECNVDKLLDIREDINKSFSEDKSTRISVNDFIILAVAKALQELPNANASWGEDAIRYHNNVDISVAVAIENGLVTPIVKNANQKNIIELSREMKELIKKAKDNKLTPEEFQGGGFTISNLGMYGIKNFNAIINPPQSCIMGVGASAKRAIVKNDQVTIATIMDVTLSADHRVVDGAVGAEFLAAFKKFIESPALMLI.

Residues 2–78 form the Lipoyl-binding domain; that stretch reads PIKILMPVLS…PVNSLIAVLS (77 aa). Residue lysine 43 is modified to N6-lipoyllysine. In terms of domain architecture, Peripheral subunit-binding (PSBD) spans 132–169; that stretch reads FASPLAKRLAKMGNIRLESVKGSGPHGRIVKQDILSYT. The active site involves histidine 385.

The protein belongs to the 2-oxoacid dehydrogenase family. Forms a 24-polypeptide structural core with octahedral symmetry. It depends on (R)-lipoate as a cofactor.

The enzyme catalyses N(6)-[(R)-dihydrolipoyl]-L-lysyl-[protein] + acetyl-CoA = N(6)-[(R)-S(8)-acetyldihydrolipoyl]-L-lysyl-[protein] + CoA. Functionally, the pyruvate dehydrogenase complex catalyzes the overall conversion of pyruvate to acetyl-CoA and CO(2). It contains multiple copies of three enzymatic components: pyruvate dehydrogenase (E1), dihydrolipoamide acetyltransferase (E2) and lipoamide dehydrogenase (E3). The chain is Dihydrolipoyllysine-residue acetyltransferase component of pyruvate dehydrogenase complex (pdhC) from Rickettsia felis (strain ATCC VR-1525 / URRWXCal2) (Rickettsia azadi).